Consider the following 426-residue polypeptide: Enolase (426 aa).

A (2R)-2-phosphoglycerate-binding site is contributed by Q163. E205 serves as the catalytic Proton donor. 3 residues coordinate Mg(2+): D242, E285, and D312. (2R)-2-phosphoglycerate contacts are provided by K337, R366, S367, and K388. Catalysis depends on K337, which acts as the Proton acceptor.

Belongs to the enolase family. In terms of assembly, component of the RNA degradosome, a multiprotein complex involved in RNA processing and mRNA degradation. It depends on Mg(2+) as a cofactor.

It localises to the cytoplasm. The protein resides in the secreted. The protein localises to the cell surface. The catalysed reaction is (2R)-2-phosphoglycerate = phosphoenolpyruvate + H2O. The protein operates within carbohydrate degradation; glycolysis; pyruvate from D-glyceraldehyde 3-phosphate: step 4/5. Its function is as follows. Catalyzes the reversible conversion of 2-phosphoglycerate (2-PG) into phosphoenolpyruvate (PEP). It is essential for the degradation of carbohydrates via glycolysis. This Nitrosococcus oceani (strain ATCC 19707 / BCRC 17464 / JCM 30415 / NCIMB 11848 / C-107) protein is Enolase.